The sequence spans 159 residues: MAESIQSLDQLSQLKTAAAPDAPKHEKKVDKFNRAYATGKRKDAVARVWIKPGAGKVTVNSREVEVYFARPVLRMMIEQPFSVAQRSGQYDVICTVAGGGLSGQAGAVRHGISKALTYFEPELRTVLKKGGFLTRDSRVVERKKYGKAKARRSFQFSKR.

Belongs to the universal ribosomal protein uS9 family.

This Bradyrhizobium diazoefficiens (strain JCM 10833 / BCRC 13528 / IAM 13628 / NBRC 14792 / USDA 110) protein is Small ribosomal subunit protein uS9.